A 111-amino-acid chain; its full sequence is Cell division protein FtsL (111 aa).

Residues methionine 1–aspartate 26 are Cytoplasmic-facing. A helical membrane pass occupies residues leucine 27 to tryptophan 47. At serine 48–lysine 111 the chain is on the periplasmic side. Positions arginine 51–threonine 85 form a coiled coil.

Belongs to the FtsL family.

It localises to the cell inner membrane. Functionally, essential cell division protein. The sequence is that of Cell division protein FtsL from Geobacter sulfurreducens (strain ATCC 51573 / DSM 12127 / PCA).